We begin with the raw amino-acid sequence, 207 residues long: Holliday junction branch migration complex subunit RuvA (207 aa).

Positions 1–65 (MIGRIRGVIL…EDAQLLYGFN (65 aa)) are domain I. Residues 66 to 143 (QKQERALFRE…KGLNGDLFEQ (78 aa)) form a domain II region. Residues 144–158 (NGDIELPASASSKAP) are flexible linker. The domain III stretch occupies residues 159 to 207 (SAADIEAEASAALIALGYKPQEAAKMISRVATAGADSETLIKEALRAAI).

The protein belongs to the RuvA family. Homotetramer. Forms an RuvA(8)-RuvB(12)-Holliday junction (HJ) complex. HJ DNA is sandwiched between 2 RuvA tetramers; dsDNA enters through RuvA and exits via RuvB. An RuvB hexamer assembles on each DNA strand where it exits the tetramer. Each RuvB hexamer is contacted by two RuvA subunits (via domain III) on 2 adjacent RuvB subunits; this complex drives branch migration. In the full resolvosome a probable DNA-RuvA(4)-RuvB(12)-RuvC(2) complex forms which resolves the HJ.

It is found in the cytoplasm. Functionally, the RuvA-RuvB-RuvC complex processes Holliday junction (HJ) DNA during genetic recombination and DNA repair, while the RuvA-RuvB complex plays an important role in the rescue of blocked DNA replication forks via replication fork reversal (RFR). RuvA specifically binds to HJ cruciform DNA, conferring on it an open structure. The RuvB hexamer acts as an ATP-dependent pump, pulling dsDNA into and through the RuvAB complex. HJ branch migration allows RuvC to scan DNA until it finds its consensus sequence, where it cleaves and resolves the cruciform DNA. The chain is Holliday junction branch migration complex subunit RuvA from Proteus mirabilis (strain HI4320).